Consider the following 134-residue polypeptide: Small ribosomal subunit protein uS9 (134 aa).

A disordered region spans residues 114–134 (QKEAKNFGGPGARSKYQKSYR).

Belongs to the universal ribosomal protein uS9 family.

The chain is Small ribosomal subunit protein uS9 from Methanosarcina mazei (strain ATCC BAA-159 / DSM 3647 / Goe1 / Go1 / JCM 11833 / OCM 88) (Methanosarcina frisia).